Reading from the N-terminus, the 234-residue chain is Large ribosomal subunit protein uL1 (234 aa).

It belongs to the universal ribosomal protein uL1 family. In terms of assembly, part of the 50S ribosomal subunit.

Binds directly to 23S rRNA. The L1 stalk is quite mobile in the ribosome, and is involved in E site tRNA release. In terms of biological role, protein L1 is also a translational repressor protein, it controls the translation of the L11 operon by binding to its mRNA. This Prochlorococcus marinus (strain MIT 9211) protein is Large ribosomal subunit protein uL1.